The primary structure comprises 323 residues: Cytochrome c biogenesis protein CcsA (323 aa).

8 consecutive transmembrane segments (helical) span residues 9-29 (ILTH…LITL), 37-57 (LYVS…GLLV), 71-91 (LYES…FTYF), 100-120 (VSAI…SGFL), 145-165 (MVLG…LIVI), 227-247 (IISL…VWAN), 261-275 (TWAF…IYLH), and 288-308 (AIVA…VNLL).

Belongs to the CcmF/CycK/Ccl1/NrfE/CcsA family. In terms of assembly, may interact with Ccs1.

It is found in the plastid. It localises to the chloroplast thylakoid membrane. Functionally, required during biogenesis of c-type cytochromes (cytochrome c6 and cytochrome f) at the step of heme attachment. This chain is Cytochrome c biogenesis protein CcsA, found in Cucumis sativus (Cucumber).